The sequence spans 355 residues: Peptide chain release factor 1 (355 aa).

An N5-methylglutamine modification is found at Gln233.

It belongs to the prokaryotic/mitochondrial release factor family. Post-translationally, methylated by PrmC. Methylation increases the termination efficiency of RF1.

It is found in the cytoplasm. Its function is as follows. Peptide chain release factor 1 directs the termination of translation in response to the peptide chain termination codons UAG and UAA. This chain is Peptide chain release factor 1, found in Syntrophomonas wolfei subsp. wolfei (strain DSM 2245B / Goettingen).